We begin with the raw amino-acid sequence, 401 residues long: Dual-specificity RNA methyltransferase RlmN (401 aa).

The Proton acceptor role is filled by Glu-114. The Radical SAM core domain occupies 120 to 365; that stretch reads DKTRGTLCVS…TMVRRTRGDD (246 aa). An intrachain disulfide couples Cys-127 to Cys-370. Cys-134, Cys-138, and Cys-141 together coordinate [4Fe-4S] cluster. S-adenosyl-L-methionine contacts are provided by residues 187–188, Ser-219, 241–243, and Asn-327; these read GE and SLH. Cys-370 functions as the S-methylcysteine intermediate in the catalytic mechanism.

This sequence belongs to the radical SAM superfamily. RlmN family. [4Fe-4S] cluster serves as cofactor.

It localises to the cytoplasm. The catalysed reaction is adenosine(2503) in 23S rRNA + 2 reduced [2Fe-2S]-[ferredoxin] + 2 S-adenosyl-L-methionine = 2-methyladenosine(2503) in 23S rRNA + 5'-deoxyadenosine + L-methionine + 2 oxidized [2Fe-2S]-[ferredoxin] + S-adenosyl-L-homocysteine. It catalyses the reaction adenosine(37) in tRNA + 2 reduced [2Fe-2S]-[ferredoxin] + 2 S-adenosyl-L-methionine = 2-methyladenosine(37) in tRNA + 5'-deoxyadenosine + L-methionine + 2 oxidized [2Fe-2S]-[ferredoxin] + S-adenosyl-L-homocysteine. Specifically methylates position 2 of adenine 2503 in 23S rRNA and position 2 of adenine 37 in tRNAs. m2A2503 modification seems to play a crucial role in the proofreading step occurring at the peptidyl transferase center and thus would serve to optimize ribosomal fidelity. The sequence is that of Dual-specificity RNA methyltransferase RlmN from Stenotrophomonas maltophilia (strain K279a).